The primary structure comprises 134 residues: DNA-binding protein inhibitor ID-2 (134 aa).

Phosphoserine occurs at positions 14 and 25. The 53-residue stretch at 23-75 (SRSKTPVDDPMSLLYNMNDCYSKLKELVPSIPQNKKVSKMEILQHVIDYILDL) folds into the bHLH domain. Residues 106–115 (LNTDISILSL) carry the Nuclear export signal motif.

Interacts with GATA4 and NKX2-5. Interacts with NR0B2. Interacts with CLOCK and BMAL1. Interacts with IFI204. Interacts with NEDD9/HEF1. Interacts with ASB4; this interaction promotes ID2 proteasomal degradation. Post-translationally, ubiquitinated in a ASB4-depedent manner, leading to proteasomal degradation. In terms of processing, phosphorylated in vitro by CDK1, PKA and PKC. Highly expressed in early fetal tissues, including those of the central nervous system.

The protein localises to the cytoplasm. The protein resides in the nucleus. Its function is as follows. Transcriptional regulator (lacking a basic DNA binding domain) which negatively regulates the basic helix-loop-helix (bHLH) transcription factors by forming heterodimers and inhibiting their DNA binding and transcriptional activity. Implicated in regulating a variety of cellular processes, including cellular growth, senescence, differentiation, apoptosis, angiogenesis, and neoplastic transformation. Inhibits skeletal muscle and cardiac myocyte differentiation. Regulates the circadian clock by repressing the transcriptional activator activity of the CLOCK-BMAL1 heterodimer. Restricts the CLOCK and BMAL1 localization to the cytoplasm. Plays a role in both the input and output pathways of the circadian clock: in the input component, is involved in modulating the magnitude of photic entrainment and in the output component, contributes to the regulation of a variety of liver clock-controlled genes involved in lipid metabolism. The chain is DNA-binding protein inhibitor ID-2 (ID2) from Homo sapiens (Human).